Consider the following 301-residue polypeptide: Probable alpha-L-glutamate ligase (301 aa).

The region spanning 104-287 (LQLLSRRGIG…VAGMIIEHLE (184 aa)) is the ATP-grasp domain. Residues lysine 141, 178–179 (EY), aspartate 187, and 211–213 (RSN) each bind ATP. Residues aspartate 248, glutamate 260, and asparagine 262 each contribute to the Mg(2+) site. Positions 248, 260, and 262 each coordinate Mn(2+).

The protein belongs to the RimK family. Mg(2+) is required as a cofactor. The cofactor is Mn(2+).

The sequence is that of Probable alpha-L-glutamate ligase from Pseudomonas entomophila (strain L48).